The following is a 505-amino-acid chain: Glucan endo-1,3-beta-glucosidase 4 (505 aa).

The first 23 residues, methionine 1 to alanine 23, serve as a signal peptide directing secretion. N-linked (GlcNAc...) asparagine glycosylation is found at asparagine 70 and asparagine 110. Catalysis depends on glutamate 119, which acts as the Proton donor. Residues asparagine 178 and asparagine 256 are each glycosylated (N-linked (GlcNAc...) asparagine). The active-site Nucleophile is glutamate 266. N-linked (GlcNAc...) asparagine glycans are attached at residues asparagine 298, asparagine 338, and asparagine 357. Cysteine 363 and cysteine 426 are joined by a disulfide. Asparagine 453 carries N-linked (GlcNAc...) asparagine glycosylation. Alanine 474 is lipidated: GPI-anchor amidated alanine. The propeptide at asparagine 475–leucine 505 is removed in mature form.

This sequence belongs to the glycosyl hydrolase 17 family. Contains two additional disulfide bonds.

Its subcellular location is the cell membrane. The enzyme catalyses Hydrolysis of (1-&gt;3)-beta-D-glucosidic linkages in (1-&gt;3)-beta-D-glucans.. This is Glucan endo-1,3-beta-glucosidase 4 from Arabidopsis thaliana (Mouse-ear cress).